Reading from the N-terminus, the 315-residue chain is Alpha- and gamma-adaptin-binding protein p34 (315 aa).

A disordered region spans residues I197 to V234. 2 positions are modified to phosphoserine: S310 and S311.

In terms of assembly, associated with AP-1 and AP-2 complexes. In terms of tissue distribution, widely expressed, including in skin and keratinocytes, with highest levels in adrenal gland, rectum and thymus.

Its subcellular location is the cytoplasm. The protein localises to the cytosol. May be involved in endocytic recycling of growth factor receptors such as EGFR. The sequence is that of Alpha- and gamma-adaptin-binding protein p34 (AAGAB) from Homo sapiens (Human).